A 470-amino-acid chain; its full sequence is Acetyl-CoA decarbonylase/synthase complex subunit gamma 2 (470 aa).

The region spanning 1–60 is the 4Fe-4S domain; sequence MKINSPLEAYKYLPQTNCGECGQPTCMAFASTLIDRSGKTTDCPPLIKEKKFAKKLAELD. The [4Fe-4S] cluster site is built by Cys-18, Cys-21, Cys-26, and Cys-43.

In terms of assembly, heterodimer of delta and gamma chains. The ACDS complex is made up of alpha, epsilon, beta, gamma and delta chains with a probable stoichiometry of (alpha(2)epsilon(2))(4)-beta(8)-(gamma(1)delta(1))(8). Requires corrinoid as cofactor. The cofactor is [4Fe-4S] cluster.

The catalysed reaction is 5,6,7,8-tetrahydrosarcinapterin + methyl-Co(III)-[corrinoid Fe-S protein] = 5-methyltetrahydrosarcinapterin + Co(I)-[corrinoid Fe-S protein] + H(+). Its pathway is one-carbon metabolism; methanogenesis from acetate. In terms of biological role, part of a complex that catalyzes the reversible cleavage of acetyl-CoA, allowing growth on acetate as sole source of carbon and energy. The sequence is that of Acetyl-CoA decarbonylase/synthase complex subunit gamma 2 from Methanosarcina mazei (strain ATCC BAA-159 / DSM 3647 / Goe1 / Go1 / JCM 11833 / OCM 88) (Methanosarcina frisia).